The sequence spans 444 residues: Cadaverine/lysine antiporter (444 aa).

12 helical membrane passes run 7–27 (IGLF…GIAL), 35–55 (IGGI…SLAY), 95–115 (IGNL…FPVL), 123–143 (IACI…GTWV), 149–169 (IGLV…WHWF), 193–213 (ILLC…TGMV), 222–242 (LATM…TQVL), 273–293 (LVSA…MMLV), 323–343 (LLLA…MNSA), 354–374 (LTGI…VDLI), 384–404 (FVSL…LMGA), and 405–425 (SSFE…FYAR).

It belongs to the amino acid-polyamine-organocation (APC) superfamily. Basic amino acid/polyamine antiporter (APA) (TC 2.A.3.2) family.

Its subcellular location is the cell inner membrane. It carries out the reaction cadaverine(in) + L-lysine(out) = cadaverine(out) + L-lysine(in). Functionally, under acidic conditions, in the presence of lysine, functions as a cadaverine:lysine antiporter that facilitates the excretion of cadaverine and the uptake of lysine. In Escherichia coli O157:H7, this protein is Cadaverine/lysine antiporter (cadB).